Reading from the N-terminus, the 545-residue chain is Propane 2-monooxygenase, hydroxylase component large subunit (545 aa).

Fe cation is bound by residues Glu97, Glu127, His130, Glu192, Glu226, and His229.

Belongs to the TmoA/XamoA family. In terms of assembly, the propane 2-monooxygenase multicomponent enzyme system is composed of an electron transfer component and a monooxygenase component interacting with the effector protein PrmD. The electron transfer component is composed of a reductase (PrmB), and the monooxygenase component is formed by a large subunit (PrmA) and a small subunit (PrmC). Probably requires the presence of the chaperonin-like protein PrmG to ensure a productive folding, resulting of a soluble PrmA, which leads to the active form of PrmABCD. Fe(2+) serves as cofactor.

It carries out the reaction propane + NADH + O2 + H(+) = propan-2-ol + NAD(+) + H2O. It catalyses the reaction phenol + NADH + O2 + H(+) = hydroquinone + NAD(+) + H2O. Functionally, component of the propane 2-monooxygenase multicomponent enzyme system which is involved in the degradation of propane via the O2-dependent hydroxylation of propane. Under acetone induction, also able to catalyze the oxidation of phenol to yield hydroquinone. This Gordonia sp. (strain TY-5) protein is Propane 2-monooxygenase, hydroxylase component large subunit.